We begin with the raw amino-acid sequence, 209 residues long: Uracil phosphoribosyltransferase (209 aa).

Residues Arg79, Arg104, and 131–139 (DPMLATGNS) contribute to the 5-phospho-alpha-D-ribose 1-diphosphate site. Uracil is bound by residues Ile194 and 199–201 (GDA). Residue Asp200 participates in 5-phospho-alpha-D-ribose 1-diphosphate binding.

The protein belongs to the UPRTase family. Requires Mg(2+) as cofactor.

The catalysed reaction is UMP + diphosphate = 5-phospho-alpha-D-ribose 1-diphosphate + uracil. It participates in pyrimidine metabolism; UMP biosynthesis via salvage pathway; UMP from uracil: step 1/1. Allosterically activated by GTP. Its function is as follows. Catalyzes the conversion of uracil and 5-phospho-alpha-D-ribose 1-diphosphate (PRPP) to UMP and diphosphate. The sequence is that of Uracil phosphoribosyltransferase from Rhizobium etli (strain CIAT 652).